The sequence spans 274 residues: MAINLYKTSTPSTRNGTVDSQVKSNPRNNLIYGQHHCGKGRNARGIITAGHRGGGHKRLYRKIDFRRNEKDIYGRIVTIEYDPNRNAYICLIHYRDGEKRYILHPRGAIIGDTIVSGTEVPIKMGNALPLTDMPLGTAIHNIEITLGKGGQLARAAGAVAKLIAKEGKSATLKLPSGEVRLISKNCSATVGQVGNVGVNQKNLGRAGSKRWLGKRPVVRGVVMNPVDHPHGGGEGRAPIGRKKPTTPWGYPALGKRSRKRNKYSDNLILRRRSK.

2 disordered regions span residues 1-22 and 224-274; these read MAIN…DSQV and NPVD…RRSK.

Belongs to the universal ribosomal protein uL2 family. As to quaternary structure, part of the 50S ribosomal subunit.

Its subcellular location is the plastid. The protein localises to the chloroplast. In Helianthus annuus (Common sunflower), this protein is Large ribosomal subunit protein uL2cz/uL2cy (rpl2-A).